We begin with the raw amino-acid sequence, 312 residues long: Elongation factor Ts, mitochondrial (312 aa).

Belongs to the EF-Ts family.

It localises to the mitochondrion. In terms of biological role, associates with the EF-Tu.GDP complex and induces the exchange of GDP to GTP. It remains bound to the aminoacyl-tRNA.EF-Tu.GTP complex up to the GTP hydrolysis stage on the ribosome. In Xenopus laevis (African clawed frog), this protein is Elongation factor Ts, mitochondrial (tsfm).